We begin with the raw amino-acid sequence, 475 residues long: Sulfate adenylyltransferase subunit 1 (475 aa).

The tr-type G domain maps to 25 to 239 (KSLLRFLTCG…EVLETVEIQR (215 aa)). The interval 34 to 41 (GSVDDGKS) is G1. 34 to 41 (GSVDDGKS) provides a ligand contact to GTP. The interval 92–96 (GITID) is G2. Residues 113–116 (DTPG) form a G3 region. GTP is bound by residues 113–117 (DTPGH) and 168–171 (NKMD). Positions 168 to 171 (NKMD) are G4. Positions 206–208 (SAL) are G5.

This sequence belongs to the TRAFAC class translation factor GTPase superfamily. Classic translation factor GTPase family. CysN/NodQ subfamily. In terms of assembly, heterodimer composed of CysD, the smaller subunit, and CysN.

The enzyme catalyses sulfate + ATP + H(+) = adenosine 5'-phosphosulfate + diphosphate. The protein operates within sulfur metabolism; hydrogen sulfide biosynthesis; sulfite from sulfate: step 1/3. With CysD forms the ATP sulfurylase (ATPS) that catalyzes the adenylation of sulfate producing adenosine 5'-phosphosulfate (APS) and diphosphate, the first enzymatic step in sulfur assimilation pathway. APS synthesis involves the formation of a high-energy phosphoric-sulfuric acid anhydride bond driven by GTP hydrolysis by CysN coupled to ATP hydrolysis by CysD. The polypeptide is Sulfate adenylyltransferase subunit 1 (Escherichia fergusonii (strain ATCC 35469 / DSM 13698 / CCUG 18766 / IAM 14443 / JCM 21226 / LMG 7866 / NBRC 102419 / NCTC 12128 / CDC 0568-73)).